Reading from the N-terminus, the 436-residue chain is Cyclic GMP-AMP synthase (436 aa).

112 to 117 (QGSFQY) serves as a coordination point for GTP. D131 and D133 together coordinate Mg(2+). R182 contributes to the ATP binding site. Residue D193 coordinates Mg(2+). ATP is bound at residue S259. Residues K287, S301, and D348 each coordinate GTP. Disordered regions lie at residues 339–358 (RGVE…PSYK) and 417–436 (AQEP…MVSG). The segment covering 419-436 (EPSSASKPEKISSTMVSG) has biased composition (polar residues). G436 is covalently cross-linked (Glycyl lysine isopeptide (Gly-Lys) (interchain with K-? in acceptor proteins)).

The protein belongs to the CD-NTase family. A01 subfamily. In terms of assembly, monomer. Interacts with Cap2 in the presence and absence of phage T2. A Cap2 dimer is bound on either side by a DncV monomer. Mg(2+) is required as a cofactor. In terms of processing, in bacteria expressing capV-cdnD-cap2, this protein is conjugated to a number of other proteins (by Cap2 via this protein's C-terminal Gly residue), many of which are involved in metabolism. More conjugated protein is found in the absence of Cap3.

It carries out the reaction GTP + ATP = 3',3'-cGAMP + 2 diphosphate. Primed for activation by Cap2 which conjugates it to cellular proteins; priming is target protein-specific (green fluorescent protein does not activate the enzyme), but which protein(s) activate is unclear. Enzymatic activity of DncV is inhibited by folate-like molecules, such as 5-methyltetrahydrofolate di-glutamate and 5-methyltetrahydrofolate, suggesting the existence of a signaling pathway that links folate-like metabolism cofactors to the regulation of cyclic dinucleotide second messenger synthesis. Lacks a regulatory loop and is constitutively activated. Cyclic nucleotide synthase (second messenger synthase) of a CBASS antivirus system. CBASS (cyclic oligonucleotide-based antiphage signaling system) provides immunity against bacteriophages. The CD-NTase protein (DncV, this protein) synthesizes cyclic nucleotides in response to infection; these serve as specific second messenger signals. The signals activate a diverse range of effectors, leading to bacterial cell death and thus abortive phage infection. A type II-A(GA) CBASS system. Functionally, catalyzes the synthesis of 3',3'-cyclic GMP-AMP (cGAMP), a second messenger in cell signal transduction, from GTP and ATP in response to phage infection. Also able to produce c-di-AMP and c-di-GMP from ATP and GTP, respectively; however, cGAMP is the dominant molecule produced by DncV in vivo, contrary to the 2'3'-cGAMP produced by eukaryotes. Is required for efficient V.cholerae intestinal colonization, and down-regulates the colonization-influencing process of chemotaxis. Is not active with dATP, TTP, UTP or CTP. Its product controls the activity of cGAMP-activated phospholipase CapV, a patatin-like lipase that is a direct cGAMP receptor encoded in the dncV operon. In terms of biological role, protects E.coli against phage infection. When the CBASS operon (capV-dncV-cap2-cap3) is introduced in E.coli MG1655 there is about 100-fold protection against phages P1 and T2. When the operon is introduced in E.coli MG1655 there is a more than 10(3) decrease in the efficiency of T2 plaque formation. Protects 100-fold against phage T5, offers no protection against T7. When the operon is introduced in E.coli MG1655 it protects against phages T2, T4, T5 and T6. Another paper shows the operon confers protection against phages P1, T2, T5 and T6 but not T4 or lambda. This Vibrio cholerae serotype O1 (strain ATCC 39315 / El Tor Inaba N16961) protein is Cyclic GMP-AMP synthase.